The sequence spans 104 residues: Thioredoxin (104 aa).

The region spanning 2–104 (AIVKVTDSNF…NLAEVIEKHL (103 aa)) is the Thioredoxin domain. Cysteine 29 and cysteine 32 are disulfide-bonded.

The protein belongs to the thioredoxin family.

Component of the thioredoxin-thioredoxin reductase system. Participates in various redox reactions through the reversible oxidation of its active center dithiol to a disulfide and catalyzes dithiol-disulfide exchange reactions. In Staphylococcus saprophyticus subsp. saprophyticus (strain ATCC 15305 / DSM 20229 / NCIMB 8711 / NCTC 7292 / S-41), this protein is Thioredoxin (trxA).